The chain runs to 357 residues: RGG repeats nuclear RNA binding protein C (357 aa).

N-acetylalanine is present on Ala2. Residues 25–232 (SQKVEKAAAA…AEEAEAREMT (208 aa)) form a disordered region. Over residues 31–45 (AAAAVQPPKAAKFPT) the composition is skewed to low complexity. Gly residues-rich tracts occupy residues 63–82 (GGRG…GNGG) and 114–128 (SRGG…GGGR). The span at 143–155 (DVERPPRNYDRHS) shows a compositional bias: basic and acidic residues. Gly residues predominate over residues 159–172 (HGTGMKRNGGGRGN). Positions 190–232 (EVEKSPVAEKQGGEDETPEAKKELTAEEKAQKEAEEAEAREMT) are enriched in basic and acidic residues. The FF domain maps to 239–299 (ILEEKKKALQ…KDATEKAKKS (61 aa)). The segment at 308-357 (PADGKRYNGRGGGSRGRGGRGGRGEGGNQRYAKEAAAPAIGDTAQFPSLG) is disordered. A compositionally biased stretch (gly residues) spans 316-334 (GRGGGSRGRGGRGGRGEGG). Residue Ser355 is modified to Phosphoserine.

Belongs to the SERBP1-HABP4 family.

The protein localises to the nucleus. Its subcellular location is the cytoplasm. It localises to the perinuclear region. Its function is as follows. Ribosome-binding protein that acts as a regulator of mRNA translation by promoting ribosome inactivation. Binds RNA. The protein is RGG repeats nuclear RNA binding protein C of Arabidopsis thaliana (Mouse-ear cress).